The chain runs to 278 residues: D-aminoacyl-tRNA deacylase (278 aa).

Belongs to the DtdA deacylase family. As to quaternary structure, monomer. Requires Zn(2+) as cofactor.

It catalyses the reaction a D-aminoacyl-tRNA + H2O = a tRNA + a D-alpha-amino acid + H(+). The enzyme catalyses glycyl-tRNA(Ala) + H2O = tRNA(Ala) + glycine + H(+). In terms of biological role, D-aminoacyl-tRNA deacylase with broad substrate specificity. By recycling D-aminoacyl-tRNA to D-amino acids and free tRNA molecules, this enzyme counteracts the toxicity associated with the formation of D-aminoacyl-tRNA entities in vivo. This Archaeoglobus fulgidus (strain ATCC 49558 / DSM 4304 / JCM 9628 / NBRC 100126 / VC-16) protein is D-aminoacyl-tRNA deacylase.